A 338-amino-acid chain; its full sequence is tRNA N6-adenosine threonylcarbamoyltransferase (338 aa).

Fe cation-binding residues include H111 and H115. Residues 134-138, D167, G180, and N272 each bind substrate; that span reads LVSGG. D300 is a binding site for Fe cation.

The protein belongs to the KAE1 / TsaD family. The cofactor is Fe(2+).

It is found in the cytoplasm. It catalyses the reaction L-threonylcarbamoyladenylate + adenosine(37) in tRNA = N(6)-L-threonylcarbamoyladenosine(37) in tRNA + AMP + H(+). In terms of biological role, required for the formation of a threonylcarbamoyl group on adenosine at position 37 (t(6)A37) in tRNAs that read codons beginning with adenine. Is involved in the transfer of the threonylcarbamoyl moiety of threonylcarbamoyl-AMP (TC-AMP) to the N6 group of A37, together with TsaE and TsaB. TsaD likely plays a direct catalytic role in this reaction. The protein is tRNA N6-adenosine threonylcarbamoyltransferase of Aliivibrio salmonicida (strain LFI1238) (Vibrio salmonicida (strain LFI1238)).